The primary structure comprises 336 residues: Phosphatidylglycerol--prolipoprotein diacylglyceryl transferase (336 aa).

Helical transmembrane passes span 16–36 (IGPV…VLAV), 53–73 (ILDI…IYHI), and 93–113 (IWNG…AAWA). Arg141 contacts a 1,2-diacyl-sn-glycero-3-phospho-(1'-sn-glycerol). A run of 3 helical transmembrane segments spans residues 190–210 (PTFL…VFLG), 220–240 (GSLF…IEAL), and 253–273 (INVW…IVIQ).

It belongs to the Lgt family.

The protein localises to the cell membrane. It catalyses the reaction L-cysteinyl-[prolipoprotein] + a 1,2-diacyl-sn-glycero-3-phospho-(1'-sn-glycerol) = an S-1,2-diacyl-sn-glyceryl-L-cysteinyl-[prolipoprotein] + sn-glycerol 1-phosphate + H(+). Its pathway is protein modification; lipoprotein biosynthesis (diacylglyceryl transfer). Its function is as follows. Catalyzes the transfer of the diacylglyceryl group from phosphatidylglycerol to the sulfhydryl group of the N-terminal cysteine of a prolipoprotein, the first step in the formation of mature lipoproteins. The protein is Phosphatidylglycerol--prolipoprotein diacylglyceryl transferase of Bifidobacterium adolescentis (strain ATCC 15703 / DSM 20083 / NCTC 11814 / E194a).